Here is a 542-residue protein sequence, read N- to C-terminus: Phosphoacetylglucosamine mutase (542 aa).

Met-1 carries the post-translational modification N-acetylmethionine. At Thr-62 the chain carries Phosphothreonine. Ser-64 serves as the catalytic Phosphoserine intermediate. Ser-64, Asp-276, Asp-278, and Asp-280 together coordinate Mg(2+). Ser-64 is subject to Phosphoserine. Substrate contacts are provided by residues 370 to 372 (EAN), 496 to 500 (RPSGT), and Arg-505.

This sequence belongs to the phosphohexose mutase family. The cofactor is Mg(2+). In terms of tissue distribution, found in many tissues except lung. Relatively high expression in pancreas, heart, liver, and placenta, and relatively low expression in brain, skeletal muscle and kidney.

It carries out the reaction N-acetyl-alpha-D-glucosamine 1-phosphate = N-acetyl-D-glucosamine 6-phosphate. It functions in the pathway nucleotide-sugar biosynthesis; UDP-N-acetyl-alpha-D-glucosamine biosynthesis; N-acetyl-alpha-D-glucosamine 1-phosphate from alpha-D-glucosamine 6-phosphate (route I): step 2/2. Functionally, catalyzes the conversion of GlcNAc-6-P into GlcNAc-1-P during the synthesis of uridine diphosphate/UDP-GlcNAc, a sugar nucleotide critical to multiple glycosylation pathways including protein N- and O-glycosylation. The protein is Phosphoacetylglucosamine mutase of Homo sapiens (Human).